Here is an 817-residue protein sequence, read N- to C-terminus: E3 ubiquitin-protein ligase TRIM9 (817 aa).

The RING-type zinc-finger motif lies at 10 to 50 (CPVCGSFYREPIILPCSHNLCQACARNILVQTPESESPQSR). Phosphothreonine is present on T41. 4 positions are modified to phosphoserine: S44, S46, S49, and S53. 2 consecutive B box-type zinc fingers follow at residues 163-212 (AAAL…LVPP) and 224-266 (RKVS…VKAL). Residues C168, C171, C193, H198, C229, H232, C252, and H258 each contribute to the Zn(2+) site. Residues 273–340 (HKSQLSQALN…KAQLLARVNK (68 aa)) adopt a coiled-coil conformation. Residues 374–432 (IKENDPSGFLQISDALIRRVHLTEDQWGKGTLTPRMTTDFDLSLDNSPLLQSIHQLDFV) form the COS domain. The Fibronectin type-III domain occupies 440-535 (VPATPILQLE…KTLVLQTSEA (96 aa)). Residues 535 to 557 (AAGAHETKPMKDTDSEEQTLPFP) form a disordered region. The span at 537-547 (GAHETKPMKDT) shows a compositional bias: basic and acidic residues. Residues 613–794 (ETQSASYSQL…VQVSLWAPGL (182 aa)) form the B30.2/SPRY domain.

Belongs to the TRIM/RBCC family. Interacts with SNAP25. Post-translationally, auto-ubiquitinated. Brain. Expression is higher in the cerebral cortex and hippocampus (at protein level). Its expression is mainly confined to the central nervous system. The developing neocortex, the dorsal thalamus, the midbrain, the basal area of the hindbrain and spinal cord show high level of expression during embryogenesis. In adult brain, it is detected in the Purkinje cells of the cerebellum, in the hippocampus, and in the cortex.

The protein localises to the cytoplasm. The protein resides in the cell projection. Its subcellular location is the dendrite. It is found in the cytoplasmic vesicle. It localises to the secretory vesicle. The protein localises to the synaptic vesicle. The protein resides in the synapse. Its subcellular location is the cytoskeleton. It catalyses the reaction S-ubiquitinyl-[E2 ubiquitin-conjugating enzyme]-L-cysteine + [acceptor protein]-L-lysine = [E2 ubiquitin-conjugating enzyme]-L-cysteine + N(6)-ubiquitinyl-[acceptor protein]-L-lysine.. It functions in the pathway protein modification; protein ubiquitination. Its function is as follows. E3 ubiquitin-protein ligase which ubiquitinates itself in cooperation with an E2 enzyme UBE2D2/UBC4 and serves as a targeting signal for proteasomal degradation. May play a role in regulation of neuronal functions. May act as a regulator of synaptic vesicle exocytosis by controlling the availability of SNAP25 for the SNARE complex formation. This chain is E3 ubiquitin-protein ligase TRIM9 (Trim9), found in Mus musculus (Mouse).